We begin with the raw amino-acid sequence, 271 residues long: Probable short-chain type dehydrogenase/reductase VdlC (271 aa).

Met-1–Lys-25 contributes to the NAD(+) binding site. Ser-129 is a substrate binding site. Tyr-142 acts as the Proton acceptor in catalysis.

It belongs to the short-chain dehydrogenases/reductases (SDR) family.

This Helicobacter pylori (strain J99 / ATCC 700824) (Campylobacter pylori J99) protein is Probable short-chain type dehydrogenase/reductase VdlC (vdlC).